Reading from the N-terminus, the 722-residue chain is Glycine--tRNA ligase beta subunit (722 aa).

The protein belongs to the class-II aminoacyl-tRNA synthetase family. In terms of assembly, tetramer of two alpha and two beta subunits.

The protein localises to the cytoplasm. It catalyses the reaction tRNA(Gly) + glycine + ATP = glycyl-tRNA(Gly) + AMP + diphosphate. This is Glycine--tRNA ligase beta subunit from Haemophilus influenzae (strain 86-028NP).